A 1375-amino-acid chain; its full sequence is Mediator of RNA polymerase II transcription subunit 13 (1375 aa).

Residues 1-51 (MKASEMARPPMRPGNPHAFASPATTPSRTASPNNAQGANVRTTQGGNQAGA) form a disordered region. Residues 22-51 (PATTPSRTASPNNAQGANVRTTQGGNQAGA) show a composition bias toward polar residues. Coiled-coil stretches lie at residues 182–216 (ADDS…WLSR) and 297–324 (QLER…KDEA). The segment covering 313-324 (AEEDAMRRKDEA) has biased composition (basic and acidic residues). 7 disordered regions span residues 313–333 (AEED…SSPF), 350–370 (YPTP…DTPS), 397–417 (YTTT…APLE), 537–581 (ATSP…PASL), 660–689 (RAVS…VDTH), 841–862 (QAKG…IPSN), and 1233–1285 (TPTT…AADP). The span at 397 to 411 (YTTTDNQQHASTSPT) shows a compositional bias: polar residues. Over residues 666 to 685 (SASDSESETSDMSEGSPEDP) the composition is skewed to acidic residues. Residues 1233-1259 (TPTTPAPSNSSAQANTNTPGSTPQTGV) are compositionally biased toward polar residues.

This sequence belongs to the Mediator complex subunit 13 family. As to quaternary structure, component of the SRB8-11 complex, which itself associates with the Mediator complex.

It is found in the nucleus. In terms of biological role, component of the SRB8-11 complex. The SRB8-11 complex is a regulatory module of the Mediator complex which is itself involved in regulation of basal and activated RNA polymerase II-dependent transcription. The SRB8-11 complex may be involved in the transcriptional repression of a subset of genes regulated by Mediator. It may inhibit the association of the Mediator complex with RNA polymerase II to form the holoenzyme complex. The sequence is that of Mediator of RNA polymerase II transcription subunit 13 (SSN2) from Phaeosphaeria nodorum (strain SN15 / ATCC MYA-4574 / FGSC 10173) (Glume blotch fungus).